The primary structure comprises 142 residues: Large ribosomal subunit protein uL13 (142 aa).

The protein belongs to the universal ribosomal protein uL13 family. Part of the 50S ribosomal subunit.

Its function is as follows. This protein is one of the early assembly proteins of the 50S ribosomal subunit, although it is not seen to bind rRNA by itself. It is important during the early stages of 50S assembly. This chain is Large ribosomal subunit protein uL13, found in Burkholderia cenocepacia (strain ATCC BAA-245 / DSM 16553 / LMG 16656 / NCTC 13227 / J2315 / CF5610) (Burkholderia cepacia (strain J2315)).